A 408-amino-acid chain; its full sequence is LL-diaminopimelate aminotransferase (408 aa).

The substrate site is built by Tyr-15 and Gly-42. Pyridoxal 5'-phosphate contacts are provided by residues Tyr-72, 108–109 (SK), Tyr-132, Asn-187, Tyr-218, and 246–248 (SFS). Lys-109, Tyr-132, and Asn-187 together coordinate substrate. Position 249 is an N6-(pyridoxal phosphate)lysine (Lys-249). Pyridoxal 5'-phosphate-binding residues include Arg-257 and Asn-291. The substrate site is built by Asn-291 and Arg-387.

The protein belongs to the class-I pyridoxal-phosphate-dependent aminotransferase family. LL-diaminopimelate aminotransferase subfamily. Homodimer. Requires pyridoxal 5'-phosphate as cofactor.

It catalyses the reaction (2S,6S)-2,6-diaminopimelate + 2-oxoglutarate = (S)-2,3,4,5-tetrahydrodipicolinate + L-glutamate + H2O + H(+). It functions in the pathway amino-acid biosynthesis; L-lysine biosynthesis via DAP pathway; LL-2,6-diaminopimelate from (S)-tetrahydrodipicolinate (aminotransferase route): step 1/1. Functionally, involved in the synthesis of meso-diaminopimelate (m-DAP or DL-DAP), required for both lysine and peptidoglycan biosynthesis. Catalyzes the direct conversion of tetrahydrodipicolinate to LL-diaminopimelate. This chain is LL-diaminopimelate aminotransferase, found in Prochlorococcus marinus (strain NATL2A).